Consider the following 372-residue polypeptide: Ciliary neurotrophic factor receptor subunit alpha (372 aa).

An N-terminal signal peptide occupies residues 1–22 (MAAPVPWACCAVLAAAAAVVYA). Positions 27–104 (PQEAPHVQYE…WHLRHQVLLH (78 aa)) constitute an Ig-like C2-type domain. A disulfide bridge connects residues cysteine 46 and cysteine 89. N-linked (GlcNAc...) asparagine glycans are attached at residues asparagine 60, asparagine 70, asparagine 142, and asparagine 190. 2 Fibronectin type-III domains span residues 108 to 205 (PPRE…VKPD) and 206 to 306 (PPEN…TEEP). Residues 290 to 294 (WSDWS) carry the WSXWS motif motif. The disordered stretch occupies residues 301–340 (PWTEEPRHLTTEAQAPETTTSTTSSLAPPPTTKICDPGEL). The segment covering 311–326 (TEAQAPETTTSTTSSL) has biased composition (low complexity). The GPI-anchor amidated serine moiety is linked to residue serine 342. The propeptide at 343–372 (GGGPSAPFLIHVPVTLALAAAAATANSLLI) is removed in mature form.

It belongs to the type I cytokine receptor family. Type 3 subfamily. In terms of assembly, forms a heterotrimer with LIFR and IL6ST. Interacts with heterodimeric neurotropic cytokine composed of CLCF1/CLC and CRLF1/CLF-1. Either alone or in complex with the heterodimer CLCF1-CRLF1 interacts with SORL1; this interaction may promote internalization and lysosomal degradation. In terms of tissue distribution, expressed in retina, brain, spleen, lung, liver and kidney. In the retina it is highly expressed by photoreceptors, but also found in the RPE, inner nuclear layer and ganglion cells.

The protein resides in the cell membrane. In terms of biological role, binds to CNTF. The alpha subunit provides the receptor specificity. In Canis lupus familiaris (Dog), this protein is Ciliary neurotrophic factor receptor subunit alpha (CNTFR).